A 164-amino-acid chain; its full sequence is MKRIAICPGSFDPITNGHLDIIERAAAIFDEVIVAVLENSSKAPLFDVEERLGLIRDVTTHLPNVSADAFGGLLVEYAAEREAATIVRGLRAVSDFEYELQIASINKKLNENVETLFMMTNSQYSFLSSSIVKEVAKYGASVSELVPEQVEIALRKKYQVSSGQ.

S10 lines the substrate pocket. Residues 10–11 and H18 contribute to the ATP site; that span reads SF. Substrate-binding residues include K42, L74, and R88. ATP is bound by residues 89–91, E99, and 124–130; these read GLR and YSFLSSS.

This sequence belongs to the bacterial CoaD family. As to quaternary structure, homohexamer. It depends on Mg(2+) as a cofactor.

The protein localises to the cytoplasm. The enzyme catalyses (R)-4'-phosphopantetheine + ATP + H(+) = 3'-dephospho-CoA + diphosphate. The protein operates within cofactor biosynthesis; coenzyme A biosynthesis; CoA from (R)-pantothenate: step 4/5. Its function is as follows. Reversibly transfers an adenylyl group from ATP to 4'-phosphopantetheine, yielding dephospho-CoA (dPCoA) and pyrophosphate. This Exiguobacterium sp. (strain ATCC BAA-1283 / AT1b) protein is Phosphopantetheine adenylyltransferase.